A 233-amino-acid polypeptide reads, in one-letter code: Large ribosomal subunit protein uL1 (233 aa).

The protein belongs to the universal ribosomal protein uL1 family. As to quaternary structure, part of the 50S ribosomal subunit.

Functionally, binds directly to 23S rRNA. The L1 stalk is quite mobile in the ribosome, and is involved in E site tRNA release. Protein L1 is also a translational repressor protein, it controls the translation of the L11 operon by binding to its mRNA. The sequence is that of Large ribosomal subunit protein uL1 from Hamiltonella defensa subsp. Acyrthosiphon pisum (strain 5AT).